A 529-amino-acid polypeptide reads, in one-letter code: BTB/POZ domain-containing protein 6 (529 aa).

Residues 127 to 197 enclose the BTB domain; sequence ADVHFIVGPA…LYSDEIDLEA (71 aa).

As to quaternary structure, homodimer and heterodimer. Interacts with cul3 via the BTB domain.

The protein resides in the cytoplasm. Adapter protein for the cul3 E3 ubiquitin-protein ligase complex. Involved in late neuronal development and muscle formation. This is BTB/POZ domain-containing protein 6 (btbd6) from Xenopus tropicalis (Western clawed frog).